The chain runs to 558 residues: Polysialic acid transport protein KpsD (558 aa).

Residues 1–20 (MKLFKSILLIAACHAAQASA) form the signal peptide.

This sequence to E.coli K5 KpsD.

The protein localises to the periplasm. In terms of biological role, involved in the translocation of the polysialic acid capsule across the outer membrane to the cell surface. May function as the periplasmic binding element of the PSA transport system, in which it transiently interacts with the membrane component of the transporter, binds polysaccharide and transports the polymer to a component in the outer membrane. The protein is Polysialic acid transport protein KpsD (kpsD) of Escherichia coli.